We begin with the raw amino-acid sequence, 470 residues long: Mitogen-activated protein kinase 15 (470 aa).

The Protein kinase domain maps to 13–306; sequence FDLQKRLGKG…VEQCLVHPYV (294 aa). ATP contacts are provided by residues 19–27 and Lys42; that span reads LGKGAYGIV. Catalysis depends on Asp137, which acts as the Proton acceptor. Thr178 carries the post-translational modification Phosphothreonine. Positions 178-180 match the TXY motif; that stretch reads TEY. At Tyr180 the chain carries Phosphotyrosine. The disordered stretch occupies residues 362-445; sequence PYGEDKSRAP…PSSIKQRRRS (84 aa). Low complexity predominate over residues 394 to 406; it reads MDKNNSSSHDSSS. The segment covering 409 to 426 has biased composition (basic and acidic residues); it reads LRERAASAESRTSKDSNG.

Belongs to the protein kinase superfamily. CMGC Ser/Thr protein kinase family. MAP kinase subfamily. Requires Mg(2+) as cofactor. In terms of processing, dually phosphorylated on Thr-178 and Tyr-180, which activates the enzyme. In terms of tissue distribution, expressed in the URX neuron and in many other head sensory neurons. Isoform a: Expressed in head and tail ciliated sensory neurons, and in mid-body neurons. Isoform c: Expressed in head and tail ciliated sensory neurons, and in mid-body neurons.

Its subcellular location is the cell projection. The protein localises to the cilium. It localises to the cilium membrane. The protein resides in the cytoplasm. It is found in the cytoskeleton. Its subcellular location is the cilium axoneme. The protein localises to the cilium basal body. It localises to the cell junction. The protein resides in the perikaryon. It is found in the dendrite. It carries out the reaction L-seryl-[protein] + ATP = O-phospho-L-seryl-[protein] + ADP + H(+). The enzyme catalyses L-threonyl-[protein] + ATP = O-phospho-L-threonyl-[protein] + ADP + H(+). Activated by threonine and tyrosine phosphorylation. Atypical MAPK protein. Regulates primary cilium formation in sensory neurons and the localization of ciliary proteins involved in cilium structure, transport, and signaling. Acts in dopamine (DA) neurons to support synaptic membrane dat-1 availability via activation of rho-1 thereby sustaining normal levels of DA clearance. Plays a role in male mating behavior, probably in part through regulating the localization of the polycystin pkd-2. Functions postembryonically in the URX sensory neurons to constrain URX dendrite growth throughout lifetime, probably by restricting expansion of the subcellular sensory compartment at the dendrite ending. This Caenorhabditis elegans protein is Mitogen-activated protein kinase 15.